The following is a 250-amino-acid chain: DNA repair protein RecO (250 aa).

The protein belongs to the RecO family.

Involved in DNA repair and RecF pathway recombination. The chain is DNA repair protein RecO from Syntrophomonas wolfei subsp. wolfei (strain DSM 2245B / Goettingen).